The following is a 406-amino-acid chain: Cysteine desulfurase (406 aa).

The residue at position 226 (K226) is an N6-(pyridoxal phosphate)lysine. C364 (cysteine persulfide intermediate) is an active-site residue.

Belongs to the class-V pyridoxal-phosphate-dependent aminotransferase family. Csd subfamily. As to quaternary structure, homodimer. Interacts with SufE and the SufBCD complex composed of SufB, SufC and SufD. The interaction with SufE is required to mediate the direct transfer of the sulfur atom from the S-sulfanylcysteine. It depends on pyridoxal 5'-phosphate as a cofactor.

It localises to the cytoplasm. The catalysed reaction is (sulfur carrier)-H + L-cysteine = (sulfur carrier)-SH + L-alanine. It catalyses the reaction L-selenocysteine + AH2 = hydrogenselenide + L-alanine + A + H(+). It functions in the pathway cofactor biosynthesis; iron-sulfur cluster biosynthesis. Its function is as follows. Cysteine desulfurases mobilize the sulfur from L-cysteine to yield L-alanine, an essential step in sulfur metabolism for biosynthesis of a variety of sulfur-containing biomolecules. Component of the suf operon, which is activated and required under specific conditions such as oxidative stress and iron limitation. Acts as a potent selenocysteine lyase in vitro, that mobilizes selenium from L-selenocysteine. Selenocysteine lyase activity is however unsure in vivo. This chain is Cysteine desulfurase, found in Shigella sonnei (strain Ss046).